The sequence spans 353 residues: UPF0283 membrane protein YcjF (353 aa).

Residues 1 to 19 are compositionally biased toward basic and acidic residues; it reads MSEPLKPRIDFAEPLKEEP. The disordered stretch occupies residues 1–35; the sequence is MSEPLKPRIDFAEPLKEEPTSAFKAQQTFSEAESR. A run of 3 helical transmembrane segments spans residues 70-90, 100-120, and 213-233; these read MVMG…IQWT, VALG…GSVV, and ESTL…FIAW.

This sequence belongs to the UPF0283 family.

Its subcellular location is the cell inner membrane. In Salmonella agona (strain SL483), this protein is UPF0283 membrane protein YcjF.